The following is a 120-amino-acid chain: Neuromedin-B (120 aa).

Positions 1-29 (MSAVPLTRMLPLRFLTHLLLLSFIPLYFC) are cleaved as a signal peptide. Positions 30–44 (MEFSEDARNIEKIRR) are excised as a propeptide. Met54 is modified (methionine amide). The propeptide occupies 58 to 120 (SLQDTYNPSE…MDDYIKTTQK (63 aa)).

Belongs to the bombesin/neuromedin-B/ranatensin family. In terms of tissue distribution, brain, intestine, and ovaries and early embryos (stages 2 and 10).

Its subcellular location is the secreted. Stimulates smooth muscle contraction. The protein is Neuromedin-B (nmb) of Xenopus laevis (African clawed frog).